Consider the following 414-residue polypeptide: Serine hydroxymethyltransferase (414 aa).

(6S)-5,6,7,8-tetrahydrofolate-binding positions include Leu118 and 122-124 (GHL). N6-(pyridoxal phosphate)lysine is present on Lys226. Position 353 to 355 (353 to 355 (SPF)) interacts with (6S)-5,6,7,8-tetrahydrofolate.

It belongs to the SHMT family. In terms of assembly, homodimer. Pyridoxal 5'-phosphate is required as a cofactor.

Its subcellular location is the cytoplasm. It catalyses the reaction (6R)-5,10-methylene-5,6,7,8-tetrahydrofolate + glycine + H2O = (6S)-5,6,7,8-tetrahydrofolate + L-serine. It functions in the pathway one-carbon metabolism; tetrahydrofolate interconversion. It participates in amino-acid biosynthesis; glycine biosynthesis; glycine from L-serine: step 1/1. Functionally, catalyzes the reversible interconversion of serine and glycine with tetrahydrofolate (THF) serving as the one-carbon carrier. This reaction serves as the major source of one-carbon groups required for the biosynthesis of purines, thymidylate, methionine, and other important biomolecules. Also exhibits THF-independent aldolase activity toward beta-hydroxyamino acids, producing glycine and aldehydes, via a retro-aldol mechanism. The polypeptide is Serine hydroxymethyltransferase (Blochmanniella floridana).